The sequence spans 689 residues: MARVFPLERTRNIGIMAHIDAGKTTTTERILFYTGRVHRIGEVDDGAATMDWMVQEQERGITITSAATTCYWRDYRINIIDTPGHVDFTVEVERSLRVLDGAIAVFDAVAGVEPQSETVWRQADKYRVPRIVYLNKMDRVGADFFKSMQSIKTKLGSDPVAVQIPLGAEDRFVGMIDLVTRKAFIYTDDLGTKIKEIPIPADLTGVVAEYREKLLEMVAETDEELMIKYLNGEELTVEDIKIGIRKATLAVKKFPVLCGSSYRNKGVQPLLDAVVDYLPAPTDVPAVCGIDQRTGREDRRVARDDEPFSALAFKVMVDPYVGKLTFFRVYSGTVNSGSHVYNSTKQKKERIGRLLQMHANHREEIEAAHAGDIIGAVGLKFTSTGDTLSDEEHPIILEAMEFPEPVISIAIEPKTKGDQDKMGVALQRLAEEDPTFKIQSNEETGQTLISGMGELHLEIIVDRLLREFKVQANIGRPQVAYKETIKGIAQAEGRFIRQTGGRGQYGHVVIVVEPLDRGKGFAFSNQIVGGVVPKEFIPAVETGVREALTSGVLFGYPVADVKVSLVDGSYHPVDSSEVAFKIAASMAVKKAVANASPVLLEPIMRVEVVLPEDYVGDVISDLNSRRGHITQMEHQGKTQIVRADVPLAEMFGYATELRSRTQGRGNHTMQFDHYAEVPQNIADKMIRKY.

The region spanning E8–T282 is the tr-type G domain. Residues A17–T24, D81–H85, and N135–D138 contribute to the GTP site.

Belongs to the TRAFAC class translation factor GTPase superfamily. Classic translation factor GTPase family. EF-G/EF-2 subfamily.

It localises to the cytoplasm. Catalyzes the GTP-dependent ribosomal translocation step during translation elongation. During this step, the ribosome changes from the pre-translocational (PRE) to the post-translocational (POST) state as the newly formed A-site-bound peptidyl-tRNA and P-site-bound deacylated tRNA move to the P and E sites, respectively. Catalyzes the coordinated movement of the two tRNA molecules, the mRNA and conformational changes in the ribosome. The sequence is that of Elongation factor G from Desulforudis audaxviator (strain MP104C).